A 378-amino-acid polypeptide reads, in one-letter code: UPF0754 membrane protein BCQ_0944 (378 aa).

The next 2 helical transmembrane spans lie at 1–21 and 357–377; these read MNIWLSMLTTTGLGAIIGGFT and YLGALLGGMIGIVQGLLLLFL.

Belongs to the UPF0754 family.

The protein resides in the cell membrane. This chain is UPF0754 membrane protein BCQ_0944, found in Bacillus cereus (strain Q1).